An 85-amino-acid chain; its full sequence is Alpha-conotoxin Lt28.1 (85 aa).

The signal sequence occupies residues 1-21 (MPKLEMMLLVLLILPLCYIDA). The propeptide occupies 22-40 (VGPPPPWNMEDEIIEHWQK). 4 disulfide bridges follow: cysteine 61/cysteine 74, cysteine 66/cysteine 84, cysteine 67/cysteine 79, and cysteine 72/cysteine 81.

It belongs to the conotoxin D superfamily. Expressed by the venom duct.

The protein resides in the secreted. Alpha-conotoxins act on postsynaptic membranes, they bind to the nicotinic acetylcholine receptors (nAChR) and thus inhibit them. This toxin weakly inhibits alpha-9-alpha-10/CHRNA9-CHRNA10 nAChRs (IC(50)=3 uM). The polypeptide is Alpha-conotoxin Lt28.1 (Conus litteratus (Lettered cone)).